The following is a 364-amino-acid chain: MNKYKKFLPLLVLIPFLASCGSDTPTRKGSKKPRPDYSKNTNGLDILMGQFSRNIDQIWGVNELLQASQKDYVKYTDKYYTRSHISFEDGQIIIETLADHNRLRNSIIHTLLMGSDATGIDLFASGDVPISNNPFLAGQVVDQYGRSVTNVAVANDFATYLLQNKLKTRRLKNGHTVTYVTIPMIANHVEVRARRYLPLVRQMSKRYGIDMSLILGIMEVESAFNPYAVSYANAIGLMQVVPRTAGRDIFARKGFGGQPNRDYLYNPSQNIDAGTMFLTILRDEYLEGITDPTSKRYAMISAYNSGAGAVLRVFDNDKLMAIERINNLDPSAIYRILTTAHPSSQARNYLVKVNKAQQKYRNVR.

A signal peptide spans 1 to 19; it reads MNKYKKFLPLLVLIPFLAS. Residue cysteine 20 is the site of N-palmitoyl cysteine attachment. The S-diacylglycerol cysteine moiety is linked to residue cysteine 20.

Belongs to the transglycosylase Slt family.

Its subcellular location is the cell outer membrane. The enzyme catalyses Exolytic cleavage of the (1-&gt;4)-beta-glycosidic linkage between N-acetylmuramic acid (MurNAc) and N-acetylglucosamine (GlcNAc) residues in peptidoglycan, from either the reducing or the non-reducing ends of the peptidoglycan chains, with concomitant formation of a 1,6-anhydrobond in the MurNAc residue.. Its function is as follows. Murein-degrading enzyme. May play a role in recycling of muropeptides during cell elongation and/or cell division. In Glaesserella parasuis serovar 5 (strain SH0165) (Haemophilus parasuis), this protein is Membrane-bound lytic murein transglycosylase C.